Consider the following 103-residue polypeptide: UPF0145 protein Dred_2155 (103 aa).

It belongs to the UPF0145 family.

The protein is UPF0145 protein Dred_2155 of Desulforamulus reducens (strain ATCC BAA-1160 / DSM 100696 / MI-1) (Desulfotomaculum reducens).